We begin with the raw amino-acid sequence, 91 residues long: MEARDVLKRPVITEKSSEAMAEDKYTFDVDTRANKTQVKIAVEEIFDVKVDSVNIINYKPKKKRMGRYQGYTNKRRKAIVKLKEGSIDLFN.

Belongs to the universal ribosomal protein uL23 family. In terms of assembly, part of the 50S ribosomal subunit. Contacts protein L29, and trigger factor when it is bound to the ribosome.

One of the early assembly proteins it binds 23S rRNA. One of the proteins that surrounds the polypeptide exit tunnel on the outside of the ribosome. Forms the main docking site for trigger factor binding to the ribosome. This is Large ribosomal subunit protein uL23 from Staphylococcus epidermidis (strain ATCC 35984 / DSM 28319 / BCRC 17069 / CCUG 31568 / BM 3577 / RP62A).